The primary structure comprises 426 residues: 3-phosphoshikimate 1-carboxyvinyltransferase (426 aa).

3-phosphoshikimate-binding residues include Lys21, Ser22, and Arg26. Lys21 provides a ligand contact to phosphoenolpyruvate. The phosphoenolpyruvate site is built by Gly93 and Arg121. The 3-phosphoshikimate site is built by Ser165, Gln167, Asp313, and Lys340. Gln167 serves as a coordination point for phosphoenolpyruvate. The active-site Proton acceptor is the Asp313. Positions 344 and 386 each coordinate phosphoenolpyruvate.

It belongs to the EPSP synthase family. As to quaternary structure, monomer.

The protein resides in the cytoplasm. The catalysed reaction is 3-phosphoshikimate + phosphoenolpyruvate = 5-O-(1-carboxyvinyl)-3-phosphoshikimate + phosphate. The protein operates within metabolic intermediate biosynthesis; chorismate biosynthesis; chorismate from D-erythrose 4-phosphate and phosphoenolpyruvate: step 6/7. Its function is as follows. Catalyzes the transfer of the enolpyruvyl moiety of phosphoenolpyruvate (PEP) to the 5-hydroxyl of shikimate-3-phosphate (S3P) to produce enolpyruvyl shikimate-3-phosphate and inorganic phosphate. The protein is 3-phosphoshikimate 1-carboxyvinyltransferase of Solibacter usitatus (strain Ellin6076).